We begin with the raw amino-acid sequence, 496 residues long: Glycerol kinase (496 aa).

T11 serves as a coordination point for ADP. ATP contacts are provided by T11, T12, and S13. Position 11 (T11) interacts with sn-glycerol 3-phosphate. R15 contributes to the ADP binding site. Residues R81, E82, Y133, and D242 each contribute to the sn-glycerol 3-phosphate site. Glycerol-binding residues include R81, E82, Y133, D242, and Q243. T264 and G307 together coordinate ADP. T264, G307, Q311, and G408 together coordinate ATP. Positions 408 and 412 each coordinate ADP.

This sequence belongs to the FGGY kinase family.

The catalysed reaction is glycerol + ATP = sn-glycerol 3-phosphate + ADP + H(+). It functions in the pathway polyol metabolism; glycerol degradation via glycerol kinase pathway; sn-glycerol 3-phosphate from glycerol: step 1/1. Inhibited by fructose 1,6-bisphosphate (FBP). Functionally, key enzyme in the regulation of glycerol uptake and metabolism. Catalyzes the phosphorylation of glycerol to yield sn-glycerol 3-phosphate. The sequence is that of Glycerol kinase from Aromatoleum aromaticum (strain DSM 19018 / LMG 30748 / EbN1) (Azoarcus sp. (strain EbN1)).